A 344-amino-acid polypeptide reads, in one-letter code: N-acetyl-gamma-glutamyl-phosphate reductase (344 aa).

Cys150 is a catalytic residue.

The protein belongs to the NAGSA dehydrogenase family. Type 1 subfamily.

It localises to the cytoplasm. It catalyses the reaction N-acetyl-L-glutamate 5-semialdehyde + phosphate + NADP(+) = N-acetyl-L-glutamyl 5-phosphate + NADPH + H(+). It participates in amino-acid biosynthesis; L-arginine biosynthesis; N(2)-acetyl-L-ornithine from L-glutamate: step 3/4. In terms of biological role, catalyzes the NADPH-dependent reduction of N-acetyl-5-glutamyl phosphate to yield N-acetyl-L-glutamate 5-semialdehyde. This is N-acetyl-gamma-glutamyl-phosphate reductase from Pseudomonas paraeruginosa (strain DSM 24068 / PA7) (Pseudomonas aeruginosa (strain PA7)).